We begin with the raw amino-acid sequence, 510 residues long: ATP synthase subunit alpha (510 aa).

Gly-169 to Thr-176 contributes to the ATP binding site.

The protein belongs to the ATPase alpha/beta chains family. F-type ATPases have 2 components, CF(1) - the catalytic core - and CF(0) - the membrane proton channel. CF(1) has five subunits: alpha(3), beta(3), gamma(1), delta(1), epsilon(1). CF(0) has three main subunits: a(1), b(2) and c(9-12). The alpha and beta chains form an alternating ring which encloses part of the gamma chain. CF(1) is attached to CF(0) by a central stalk formed by the gamma and epsilon chains, while a peripheral stalk is formed by the delta and b chains.

The protein localises to the cell inner membrane. The catalysed reaction is ATP + H2O + 4 H(+)(in) = ADP + phosphate + 5 H(+)(out). Produces ATP from ADP in the presence of a proton gradient across the membrane. The alpha chain is a regulatory subunit. The protein is ATP synthase subunit alpha of Nitrobacter hamburgensis (strain DSM 10229 / NCIMB 13809 / X14).